A 396-amino-acid polypeptide reads, in one-letter code: Elongation factor Tu (396 aa).

The tr-type G domain occupies 10-206 (KPHVNVGTIG…ALDSYIPTPE (197 aa)). The G1 stretch occupies residues 19-26 (GHVDHGKT). Position 19 to 26 (19 to 26 (GHVDHGKT)) interacts with GTP. Thr-26 contacts Mg(2+). Residues 60–64 (GITIN) are G2. A G3 region spans residues 81–84 (DCPG). GTP-binding positions include 81-85 (DCPGH) and 136-139 (NKCD). Residues 136-139 (NKCD) form a G4 region. The segment at 174 to 176 (SAK) is G5.

This sequence belongs to the TRAFAC class translation factor GTPase superfamily. Classic translation factor GTPase family. EF-Tu/EF-1A subfamily. In terms of assembly, monomer.

The protein resides in the cytoplasm. The enzyme catalyses GTP + H2O = GDP + phosphate + H(+). In terms of biological role, GTP hydrolase that promotes the GTP-dependent binding of aminoacyl-tRNA to the A-site of ribosomes during protein biosynthesis. This is Elongation factor Tu from Methylibium petroleiphilum (strain ATCC BAA-1232 / LMG 22953 / PM1).